We begin with the raw amino-acid sequence, 515 residues long: Mucin-like protein Glc1.8b (515 aa).

Positions 1–20 are cleaved as a signal peptide; that stretch reads MSQITLIILVLAIGFSCTKS. The Extracellular portion of the chain corresponds to 21 to 467; the sequence is HPINSTRDGE…ANDIKKPAFP (447 aa). Asn24, Asn45, Asn51, Asn60, Asn85, Asn93, Asn102, Asn123, Asn129, Asn138, Asn180, Asn201, Asn207, Asn216, Asn258, Asn279, Asn285, Asn294, Asn319, Asn327, Asn336, Asn357, Asn363, Asn372, Asn397, Asn405, Asn413, Asn434, and Asn441 each carry an N-linked (GlcNAc...) asparagine; by host glycan. Positions 80-114 are disordered; that stretch reads SKKDENITGQSEINTSAKSQPINSTRDGEDSGTDL. The span at 86–104 shows a compositional bias: polar residues; it reads ITGQSEINTSAKSQPINST. The interval 314-358 is disordered; the sequence is SKKDENITGQSEINTSAKSQPINSTRDGEDSGTDLKNLLTDPANT. Positions 320-338 are enriched in polar residues; it reads ITGQSEINTSAKSQPINST. The tract at residues 393-413 is disordered; that stretch reads RKDENVTGQSEFNISTNSNLN. Residues 468–488 form a helical membrane-spanning segment; the sequence is YCIILITFQIVTVGMIIYLVF. Over 489-515 the chain is Cytoplasmic; sequence RTMRKPCQSERAIPLNSFGFGNNSSYE.

Belongs to the polydnaviridae Glc1.8 protein family.

It is found in the host membrane. Its function is as follows. Involved in suppression of the insect cellular immune response. Inhibits host hemocyte adhesion and phagocytosis. The polypeptide is Mucin-like protein Glc1.8b (O16) (Microplitis demolitor (Parasitoid wasp)).